The primary structure comprises 85 residues: Small ribosomal subunit protein uS17 (85 aa).

The protein belongs to the universal ribosomal protein uS17 family. As to quaternary structure, part of the 30S ribosomal subunit.

One of the primary rRNA binding proteins, it binds specifically to the 5'-end of 16S ribosomal RNA. The sequence is that of Small ribosomal subunit protein uS17 from Mycoplasma capricolum subsp. capricolum (strain California kid / ATCC 27343 / NCTC 10154).